Here is a 190-residue protein sequence, read N- to C-terminus: Potassium-transporting ATPase KdpC subunit (190 aa).

Residues threonine 10–glycine 30 traverse the membrane as a helical segment.

Belongs to the KdpC family. In terms of assembly, the system is composed of three essential subunits: KdpA, KdpB and KdpC.

It localises to the cell inner membrane. Part of the high-affinity ATP-driven potassium transport (or Kdp) system, which catalyzes the hydrolysis of ATP coupled with the electrogenic transport of potassium into the cytoplasm. This subunit acts as a catalytic chaperone that increases the ATP-binding affinity of the ATP-hydrolyzing subunit KdpB by the formation of a transient KdpB/KdpC/ATP ternary complex. The polypeptide is Potassium-transporting ATPase KdpC subunit (Escherichia coli O7:K1 (strain IAI39 / ExPEC)).